Here is a 429-residue protein sequence, read N- to C-terminus: Zygotic gap protein knirps (429 aa).

The nuclear receptor DNA-binding region spans 2 to 78 (NQTCKVCGEP…VGMSKGGSRY (77 aa)). NR C4-type zinc fingers lie at residues 5-25 (CKVC…CEGC) and 42-66 (CKNE…LRKC). Residues 112–126 (SVGGAPSASSPVGSP) show a composition bias toward low complexity. Disordered stretches follow at residues 112–148 (SVGG…QQQQ), 223–250 (QSVD…SSAR), 338–357 (TSRS…QEVE), and 375–397 (SSSS…AEVK). 2 stretches are compositionally biased toward polar residues: residues 225–237 (VDSV…FSPA) and 338–349 (TSRSSVHSFNDS). Over residues 375-393 (SSSSSSHSAAHSPNTTTAH) the composition is skewed to low complexity.

The protein belongs to the nuclear hormone receptor family. NR0 subfamily.

The protein localises to the nucleus. Transcriptional repressor. Binds to multiple sites in the eve stripe 3 enhancer element. Plays an essential role in the segmentation process both by refining the expression patterns of gap genes and by establishing pair-rules stripes of gene expression. This chain is Zygotic gap protein knirps (kni), found in Drosophila melanogaster (Fruit fly).